A 194-amino-acid polypeptide reads, in one-letter code: Large ribosomal subunit protein eL15 (194 aa).

The interval 164–194 is disordered; that stretch reads SAGKKGRGLRNKGKGAEKVRPSVRANKGKTK. Over residues 167-176 the composition is skewed to basic residues; that stretch reads KKGRGLRNKG.

The protein belongs to the eukaryotic ribosomal protein eL15 family.

This chain is Large ribosomal subunit protein eL15, found in Thermococcus gammatolerans (strain DSM 15229 / JCM 11827 / EJ3).